The following is a 582-amino-acid chain: Probable inorganic phosphate transporter 1-9 (582 aa).

Residues 1–23 (MAPRIRVLAALDQARTQYYHFKA) are Cytoplasmic-facing. The chain crosses the membrane as a helical span at residues 24-44 (IVIAGMGLFTDSYDLFCISPV). Residues 45–75 (MKIFGRVYYAPSGSVDGSGSGPGVTPPAVVS) are Extracellular-facing. A helical membrane pass occupies residues 76-96 (ATVGVALLGAVAGNVVFGALG). The Cytoplasmic portion of the chain corresponds to 97–103 (DRVGRRR). Residues 104–124 (VYGACLLLMVCSSVGSGLSVC) traverse the membrane as a helical segment. The Extracellular portion of the chain corresponds to 125 to 130 (RTRRCA). The chain crosses the membrane as a helical span at residues 131–151 (LASLCFFRFLLGVGVGGDYPL). Topologically, residues 152 to 165 (SATIMSEFANRRTR) are cytoplasmic. A helical transmembrane segment spans residues 166 to 186 (GAFIAAVFSMQGFGILVSSAV). Topologically, residues 187-210 (TMAVAAAFDHYTGYPAPLDTPECA) are extracellular. A helical membrane pass occupies residues 211-231 (DLAWRIILMAGAVPAALTYYW). At 232–307 (RMSMPETARY…RRFVRQHGRD (76 aa)) the chain is on the cytoplasmic side. The helical transmembrane segment at 308 to 328 (LFACAAAWFLLDIPYYSSTLF) threads the bilayer. The Extracellular portion of the chain corresponds to 329 to 354 (QSQIYRPWFPPAAKVNAFQEAFNVAK). The helical transmembrane segment at 355-375 (FQAVIAVASTIPGYFAAMLLI) threads the bilayer. The Cytoplasmic portion of the chain corresponds to 376–385 (ERAGRRRLQM). The chain crosses the membrane as a helical span at residues 386–406 (AGFLLMAVFLFALAGPYDGYW). Topologically, residues 407–415 (RDHAKTAGY) are extracellular. A helical membrane pass occupies residues 416 to 436 (IVLYSLTFFSANLGPNTTTFI). Residues 437-451 (LPAELFPARFRSTCH) lie on the Cytoplasmic side of the membrane. The chain crosses the membrane as a helical span at residues 452–472 (GLSGAAGKLGALVGSIGFLWA). Over 473–485 (SQQKDGAAAGHLP) the chain is Extracellular. Residues 486–506 (GIGMMYALFVLGGICLLGLAL) traverse the membrane as a helical segment. At 507–582 (TYAFTPETMT…SPILPHRMSL (76 aa)) the chain is on the cytoplasmic side. The tract at residues 519 to 541 (LEENESSVQAQSQVGDGGSDAGN) is disordered.

The protein belongs to the major facilitator superfamily. Phosphate:H(+) symporter (TC 2.A.1.9) family. As to expression, expressed at low levels in roots.

The protein localises to the membrane. Its function is as follows. High-affinity transporter for external inorganic phosphate. The sequence is that of Probable inorganic phosphate transporter 1-9 (PHT1-9) from Oryza sativa subsp. japonica (Rice).